Consider the following 538-residue polypeptide: Bifunctional purine biosynthesis protein PurH (538 aa).

The MGS-like domain maps to 8 to 158; that stretch reads IPAPDKVEIK…KNHAYVTILT (151 aa).

The protein belongs to the PurH family.

It carries out the reaction (6R)-10-formyltetrahydrofolate + 5-amino-1-(5-phospho-beta-D-ribosyl)imidazole-4-carboxamide = 5-formamido-1-(5-phospho-D-ribosyl)imidazole-4-carboxamide + (6S)-5,6,7,8-tetrahydrofolate. The enzyme catalyses IMP + H2O = 5-formamido-1-(5-phospho-D-ribosyl)imidazole-4-carboxamide. Its pathway is purine metabolism; IMP biosynthesis via de novo pathway; 5-formamido-1-(5-phospho-D-ribosyl)imidazole-4-carboxamide from 5-amino-1-(5-phospho-D-ribosyl)imidazole-4-carboxamide (10-formyl THF route): step 1/1. It functions in the pathway purine metabolism; IMP biosynthesis via de novo pathway; IMP from 5-formamido-1-(5-phospho-D-ribosyl)imidazole-4-carboxamide: step 1/1. The polypeptide is Bifunctional purine biosynthesis protein PurH (Rhizobium leguminosarum bv. trifolii (strain WSM2304)).